A 228-amino-acid polypeptide reads, in one-letter code: Urease accessory protein UreF (228 aa).

The protein belongs to the UreF family. UreD, UreF and UreG form a complex that acts as a GTP-hydrolysis-dependent molecular chaperone, activating the urease apoprotein by helping to assemble the nickel containing metallocenter of UreC. The UreE protein probably delivers the nickel.

The protein resides in the cytoplasm. In terms of biological role, required for maturation of urease via the functional incorporation of the urease nickel metallocenter. This chain is Urease accessory protein UreF, found in Blochmanniella pennsylvanica (strain BPEN).